The sequence spans 365 residues: G-protein coupled receptor 68 (365 aa).

Residues 1-12 (MGNITTENSSLS) lie on the Extracellular side of the membrane. Residues Asn3 and Asn8 are each glycosylated (N-linked (GlcNAc...) asparagine). The chain crosses the membrane as a helical span at residues 13 to 49 (CPIDHTIHQTLAPVVYVTVLVVGFPANCLSLYFGYLQ). 2 cysteine pairs are disulfide-bonded: Cys13/Cys258 and Cys94/Cys172. Residues 50 to 53 (IKAR) lie on the Cytoplasmic side of the membrane. Residues 54 to 84 (NELGVYLCNLTIADLFYICSLPFWLQYVLQH) form a helical membrane-spanning segment. Residues 85 to 89 (DDWSH) are Extracellular-facing. The chain crosses the membrane as a helical span at residues 90-125 (GDLSCQVCGILLYENIYISVGFLCCISIDRYLAVAH). Residues 126–133 (PFRFHQFR) lie on the Cytoplasmic side of the membrane. The chain crosses the membrane as a helical span at residues 134 to 160 (TLKAAVGVSVLIWAKELLTSIYFLNHK). At 161 to 176 (EVIEDEDQHRVCFEHY) the chain is on the extracellular side. The interval 161–176 (EVIEDEDQHRVCFEHY) is extracellular loop 2 (ECL2). Residues 177 to 214 (PIQAWQRSINYYRFLVGFLFPICLLLASYQGILRAVRR) traverse the membrane as a helical segment. Residues 215-218 (SHGT) are Cytoplasmic-facing. A helical transmembrane segment spans residues 219–254 (QKSRKDQIQRLVLSTVVIFLACFLPYHVLLLVRSLW). Residues 255–260 (ERNCEF) are Extracellular-facing. The chain crosses the membrane as a helical span at residues 261–289 (AKSIFNVYHFSLLLTSFNCVADPVLYCFV). The Cytoplasmic portion of the chain corresponds to 290 to 365 (SETTHRDLAR…VGGPSTVGLA (76 aa)).

It belongs to the G-protein coupled receptor 1 family. Expressed in the lung, testis, heart, brain, spleen, thymus, brown fat, small intestine, colon, peripheral blood leukocytes, macrophages, stomach, ovary and white fat but not in the liver, kidney, and skeletal muscle. Expression in the prostate is weak but detectable. Specifically expressed in endothelial cells of small-diameter resistance arteries.

The protein resides in the cell membrane. Its activity is regulated as follows. Activated by a network of residues that connects an extracellular-facing cavity to Glu-149, a conserved charged residue buried in the transmembrane core of the receptor. Protonation likely drives conformational changes in extracellular loop 2 (ECL2), which stabilizes movement of transmembrane 3 (TM3) and a series of rearrangements that connect the extracellular-facing cavity to Glu-149, a residue only conserved in proton-sensing G-protein coupled receptors. Activated in an allosteric manner by divalent metal ions at the extracellular surface following the order: Cd(2+) &gt; Co(2+) &gt; Ni(2+) &gt; Zn(2+) &gt; Fe(2+) &gt; Ca(2+) &gt; Mg(2+). Activated by ogerin (ZINC67740571), a selective GPR68 positive allosteric modulator. Inhibited by small molecule GPR68-I, decreasing inflammation in models of colitis. In terms of biological role, proton-sensing G-protein coupled receptor activated by extracellular pH, which is required to monitor pH changes and generate adaptive reactions. The receptor is almost silent at pH 7.8 but fully activated at pH 6.8. Ligand binding causes a conformation change that triggers signaling via guanine nucleotide-binding proteins (G proteins) and modulates the activity of downstream effectors, such as phospholipase C. GPR68 is mainly coupled to G(q) G proteins and mediates production of diacylglycerol (DAG) and inositol 1,4,5-trisphosphate (IP3). Acts as a key mechanosensor of fluid shear stress and membrane stretch. Expressed in endothelial cells of small-diameter resistance arteries, where it mediates flow-induced dilation in response to shear stress. May represents an osteoblastic pH sensor regulating cell-mediated responses to acidosis in bone. Acts as a regulator of calcium-sensing receptor CASR in a seesaw manner: GPR68-mediated signaling inhibits CASR signaling in response to protons, while CASR inhibits GPR68 in presence of extracellular calcium. Also functions as a metastasis suppressor gene in prostate cancer. This chain is G-protein coupled receptor 68, found in Mus musculus (Mouse).